A 105-amino-acid chain; its full sequence is Large ribosomal subunit protein uL24 (105 aa).

This sequence belongs to the universal ribosomal protein uL24 family. Part of the 50S ribosomal subunit.

Functionally, one of two assembly initiator proteins, it binds directly to the 5'-end of the 23S rRNA, where it nucleates assembly of the 50S subunit. One of the proteins that surrounds the polypeptide exit tunnel on the outside of the subunit. The sequence is that of Large ribosomal subunit protein uL24 from Psychrobacter cryohalolentis (strain ATCC BAA-1226 / DSM 17306 / VKM B-2378 / K5).